Reading from the N-terminus, the 550-residue chain is Chaperonin GroEL (550 aa).

ATP contacts are provided by residues Thr-30 to Pro-33, Lys-51, Asp-87 to Thr-91, Gly-415, Asn-479 to Ala-481, and Asp-495.

This sequence belongs to the chaperonin (HSP60) family. As to quaternary structure, forms a cylinder of 14 subunits composed of two heptameric rings stacked back-to-back. Interacts with the co-chaperonin GroES.

It localises to the cytoplasm. The enzyme catalyses ATP + H2O + a folded polypeptide = ADP + phosphate + an unfolded polypeptide.. Functionally, together with its co-chaperonin GroES, plays an essential role in assisting protein folding. The GroEL-GroES system forms a nano-cage that allows encapsulation of the non-native substrate proteins and provides a physical environment optimized to promote and accelerate protein folding. This chain is Chaperonin GroEL, found in Aromatoleum aromaticum (strain DSM 19018 / LMG 30748 / EbN1) (Azoarcus sp. (strain EbN1)).